A 383-amino-acid polypeptide reads, in one-letter code: Putative glutamate--cysteine ligase 2-2 (383 aa).

This sequence belongs to the glutamate--cysteine ligase type 2 family. YbdK subfamily.

The catalysed reaction is L-cysteine + L-glutamate + ATP = gamma-L-glutamyl-L-cysteine + ADP + phosphate + H(+). ATP-dependent carboxylate-amine ligase which exhibits weak glutamate--cysteine ligase activity. This Paenarthrobacter aurescens (strain TC1) protein is Putative glutamate--cysteine ligase 2-2.